A 288-amino-acid chain; its full sequence is Protein shisa-2 (288 aa).

A signal peptide spans Met1 to Ala23. Residues Ala24–Pro110 lie on the Extracellular side of the membrane. The helical transmembrane segment at Phe111–Cys131 threads the bilayer. Over Cys132–Val288 the chain is Cytoplasmic. The span at Ser161–Ala188 shows a compositional bias: low complexity. Residues Ser161–Asn198 are disordered.

The protein belongs to the shisa family. In terms of assembly, interacts with fzd8 and fgfr1.

It localises to the endoplasmic reticulum membrane. Its function is as follows. Plays an essential role in the maturation of presomitic mesoderm cells by individual attenuation of both fgf and wnt signaling. Inhibits both wnt and fgf signaling through the regulation of protein maturation and cell surface transportation of their receptors within the endoplasmic reticulum. The polypeptide is Protein shisa-2 (shisa2) (Xenopus laevis (African clawed frog)).